The sequence spans 463 residues: MTSETRTLYSQLPAIDRLLHDSAFLSLRDRYGHTQVVDLLRRMLDDARDVIRNTQTLPDWYADWAQEAKLRLENAAQSALRPVINLTGTVLHTNLGRALQAQEAVEAVTQAMRAPVTLEYDLDGAGRGHRDRALATLLCRITGAEDACIVNNNAAAVLLMLAATASGKEVVVSRGELVEIGGAFRIPDVMRQAGCTLHEVGTTNRTHAKDYRQAVNENTGLLMKVHTSNYSIEGFTKTVEEAELAEIGRELDIPVVADLGSGSLVDLSQYGLPKEPMPQQLIAAGVSLVSFSGDKLLGGPQAGIIVGKKAMIAQLQSHPLKRALRADKMTLAALEATLRLYLHPEALAEKLPTLRLLTRSEASIREQAQRLQARLAARYGDEFALEVKPCLSQIGSGSLPVDRLPSAAMTFTPHDGRGSRLEALAARWRTLPVPVIGRIYDGRLWLDMRCLEDESRFMEMMLK.

Lys295 carries the post-translational modification N6-(pyridoxal phosphate)lysine.

It belongs to the SelA family. In terms of assembly, homodecamer; pentamer of dimers. Binds only one seryl-tRNA(Sec) per dimer. Pyridoxal 5'-phosphate is required as a cofactor.

Its subcellular location is the cytoplasm. It catalyses the reaction L-seryl-tRNA(Sec) + selenophosphate + H(+) = L-selenocysteinyl-tRNA(Sec) + phosphate. The protein operates within aminoacyl-tRNA biosynthesis; selenocysteinyl-tRNA(Sec) biosynthesis; selenocysteinyl-tRNA(Sec) from L-seryl-tRNA(Sec) (bacterial route): step 1/1. Its function is as follows. Converts seryl-tRNA(Sec) to selenocysteinyl-tRNA(Sec) required for selenoprotein biosynthesis. In Salmonella dublin (strain CT_02021853), this protein is L-seryl-tRNA(Sec) selenium transferase.